The sequence spans 178 residues: Oligoribonuclease (178 aa).

The 162-residue stretch at leucine 7–leucine 168 folds into the Exonuclease domain. Tyrosine 128 is an active-site residue.

The protein belongs to the oligoribonuclease family.

It localises to the cytoplasm. Functionally, 3'-to-5' exoribonuclease specific for small oligoribonucleotides. This is Oligoribonuclease from Francisella tularensis subsp. holarctica (strain OSU18).